Reading from the N-terminus, the 423-residue chain is Voltage-dependent calcium channel gamma-8 subunit (423 aa).

4 consecutive transmembrane segments (helical) span residues 19–39 (VQVLLTTIGAFSAFGLMTIAI), 127–147 (SSIFPILSAILLLLGGVCVAA), 157–177 (IILGAGILFVAAGLSNIIGVI), and 207–227 (FGGLSFILAEVIGVLAVNIYI). A phosphoserine mark is found at Ser251 and Ser254. Residues 271–304 (RRSRSSSRGSSEASPSRDASPGGPGGPGFASTDI) form a disordered region. Residues 276–287 (SSRGSSEASPSR) show a composition bias toward low complexity. Residues 318–338 (VAAGLASAGGGGSGAGVGAYG) traverse the membrane as a helical segment. 2 disordered regions span residues 342–363 (GAAGGGGAGSERDRGSSAGFLT) and 378–423 (VTVT…TTPV). The segment covering 384–399 (PAAPAPAPAPPAPAAP) has biased composition (pro residues). Positions 410–423 (ASNTNTLNRKTTPV) are enriched in polar residues.

This sequence belongs to the PMP-22/EMP/MP20 family. CACNG subfamily. As to quaternary structure, interacts with CACNA1C. Identified in a complex with the L-type calcium channel subunits CACNA1C, CACNA2D1 and either CACNB1 or CACNB2. Acts as an auxiliary subunit for AMPA-selective glutamate receptors (AMPARs). Found in a complex with GRIA1, GRIA2, GRIA3, GRIA4, CNIH2, CNIH3, CACNG2, CACNG3, CACNG4, CACNG5 and CACNG7. Interacts with CNIH2. Found in a complex with GRIA1, GRIA2, GRIA3, GRIA4, DLG4 and CNIH2. Palmitoylated. Probably palmitoylated by ZDHHC3 and ZDHHC7.

It is found in the cell membrane. It localises to the postsynaptic density membrane. Its function is as follows. Regulates the activity of L-type calcium channels that contain CACNA1C as pore-forming subunit. Regulates the trafficking and gating properties of AMPA-selective glutamate receptors (AMPARs). Promotes their targeting to the cell membrane and synapses and modulates their gating properties by slowing their rates of activation, deactivation and desensitization and by mediating their resensitization. Does not show subunit-specific AMPA receptor regulation and regulates all AMPAR subunits. Thought to stabilize the calcium channel in an inactivated (closed) state. This Mus musculus (Mouse) protein is Voltage-dependent calcium channel gamma-8 subunit.